Consider the following 365-residue polypeptide: Peptidyl-prolyl cis-trans isomerase FKBP42 (365 aa).

Residues 1–15 (MDESLEHQTQTHDQE) show a composition bias toward basic and acidic residues. The disordered stretch occupies residues 1 to 44 (MDESLEHQTQTHDQESEIVTEGSAVVHSEPSQEGNVPPKVDSEA). The interval 1–163 (MDESLEHQTQ…EVIGFDETKE (163 aa)) is interaction with MDR1/PGP1. In terms of domain architecture, PPIase FKBP-type spans 67–159 (YSTCFLHYRA…LYEVEVIGFD (93 aa)). Residues 163-337 (EGKARSDMTV…GKDEGGAKSK (175 aa)) are interaction with MRP1. TPR repeat units follow at residues 179–212 (ADRR…MGDD), 230–263 (NPCH…EEKN), and 264–297 (PKAL…APDD). A calmodulin-binding region spans residues 310–326 (QEKALYQKQKEMYKGIF). Residues 338–357 (SLFWLIVLWQWFVSLFSRIF) traverse the membrane as a helical; Anchor for type IV membrane protein segment.

This sequence belongs to the FKBP-type PPIase family. In terms of assembly, interacts with calmodulin (CaM), MRP1, MRP2, MDR1/PGP1, MDR11/PGP19 and SHD/HSP90. Interacts with 1-naphthylphthalamic acid (NPA).

Its subcellular location is the cell membrane. The protein resides in the vacuole membrane. It localises to the endoplasmic reticulum. The enzyme catalyses [protein]-peptidylproline (omega=180) = [protein]-peptidylproline (omega=0). Its function is as follows. PPIases accelerate the folding of proteins. It catalyzes the cis-trans isomerization of proline imidic peptide bonds in oligopeptides. Modulates the uptake of MRP substrates into the vacuole; reduces metolachlor-GS (MOC-GS) and enhances 17-beta-estradiol 17-(beta-D-glucuronide) (E(2)17betaG) uptake. Regulates cell elongation and orientation. Functions as a positive regulator of PGP1-mediated auxin transport. Confers drug modulation of PGP1 efflux activity as interaction with NPA or flavonol quercetin prevents its physical and functional interaction with PGP1. Required for the proper localization of auxin-related ABCB transporters. Plays a role in brassinosteroid (BR) signaling pathway. Required for seed development by promoting stamen elongation and, to a lesser extent, anther dehiscence and pollen maturation, probably as a chaperone helping ABCB1 and ABCB19 auxin transporters localization and activation. Involved in auxin signaling in nectaries to promote starch accumulation to attract visiting pollinators. In Arabidopsis thaliana (Mouse-ear cress), this protein is Peptidyl-prolyl cis-trans isomerase FKBP42.